The chain runs to 643 residues: Versicolorin B synthase (643 aa).

Residues 1 to 41 constitute a propeptide that is removed on maturation; that stretch reads MGRNWFQVTAMAVVPVVGIMAAVNPTILSSAASSLPSLGAM. Residues 84–85 and 105–106 contribute to the FAD site; these read TA and EA. Residue Asn116 is glycosylated (N-linked (GlcNAc...) asparagine). Residue 171–174 participates in FAD binding; that stretch reads GAML. 2 N-linked (GlcNAc...) asparagine glycosylation sites follow: Asn221 and Asn507. Residues Ala613 and 624 to 625 each bind FAD; that span reads PM.

Belongs to the GMC oxidoreductase family. Homodimer. It depends on FAD as a cofactor. In terms of processing, N-glycosylated.

Its subcellular location is the cytoplasm. It localises to the cytosol. The enzyme catalyses (2S-3S)-versiconal hemiacetal = versicolorin B + H2O. It catalyses the reaction (S)-5'-oxoaverantin + H(+) = (1'S,5'S)-averufin + H2O. The protein operates within mycotoxin biosynthesis; aflatoxin biosynthesis. Dual cyclase; part of the gene cluster that mediates the biosynthesis of aflatoxins, a group of polyketide-derived furanocoumarins, and part of the most toxic and carcinogenic compounds among the known mycotoxins. The four major aflatoxins produced by A.parasiticus are aflatoxin B1 (AFB1), aflatoxin B2 (AFB2), aflatoxin G1 (AFG1) and aflatoxin G2 (AFG2). Aflk plays a dual role within the aflatoxin pathway, as a 5'-oxoaverantin cyclase that mediates conversion of 5'-oxoaverantin (OAVN) to averufin (AVF), as well as a versicolorin B synthase that converts versiconal (VAL) to versicolorin B (VERB) by closing the bisfuran ring of aflatoxin which is required for DNA-binding, thus giving to aflatoxin its activity as a mutagen. The biosynthesis of aflatoxins begins with the norsolorinic acid synthase aflC that combines a hexanoyl starter unit produced by the fatty acid synthase aflA/aflB and 7 malonyl-CoA extender units to synthesize the precursor NOR. The second step is the conversion of NOR to averantin and requires the norsolorinic acid ketoreductase aflD, which catalyzes the dehydration of norsolorinic acid to form (1'S)-averantin. The norsolorinic acid reductases aflE and aflF may also play a role in the conversion of NOR to AVN. The cytochrome P450 monooxygenase aflG then catalyzes the hydroxylation of AVN to 5'hydroxyaverantin (HAVN). The next step is performed by the 5'-hydroxyaverantin dehydrogenase aflH that transforms HAVN to 5'-oxoaverantin (OAVN) which is further converted to averufin (AVF) by aflK that plays a dual role in the pathway, as a 5'-oxoaverantin cyclase that mediates conversion of 5'-oxoaverantin, as well as a versicolorin B synthase in a later step in the pathway. The averufin oxidase aflI catalyzes the conversion of AVF to versiconal hemiacetal acetate (VHA). VHA is then the substrate for the versiconal hemiacetal acetate esterase aflJ to yield versiconal (VAL). Versicolorin B synthase aflK then converts VAL to versicolorin B (VERB) by closing the bisfuran ring of aflatoxin which is required for DNA-binding, thus giving to aflatoxin its activity as a mutagen. Then, the activity of the versicolorin B desaturase aflL leads to versicolorin A (VERA). A branch point starts from VERB since it can also be converted to dihydrodemethylsterigmatocystin (DMDHST), probably also by aflL, VERA being a precursor for aflatoxins B1 and G1, and DMDHST for aflatoxins B2 and G2. Next, the versicolorin reductase aflM and the cytochrome P450 monooxygenase aflN are involved in conversion of VERA to demethylsterigmatocystin (DMST). AflX and aflY seem also involved in this step, through probable aflX-mediated epoxide ring-opening step following versicolorin A oxidation and aflY-mediated Baeyer-Villiger oxidation required for the formation of the xanthone ring. The methyltransferase aflO then leads to the modification of DMST to sterigmatocystin (ST), and of DMDHST to dihydrosterigmatocystin (DHST). Both ST and DHST are then substrates of the O-methyltransferase aflP to yield O-methylsterigmatocystin (OMST) and dihydro-O-methylsterigmatocystin (DHOMST), respectively. Finally OMST is converted to aflatoxins B1 and G1, and DHOMST to aflatoxins B2 and G2, via the action of several enzymes including O-methylsterigmatocystin oxidoreductase aflQ, the cytochrome P450 monooxygenase aflU, but also the NADH-dependent flavin oxidoreductase nadA which is specifically required for the synthesis of AFG1. The chain is Versicolorin B synthase from Aspergillus parasiticus (strain ATCC 56775 / NRRL 5862 / SRRC 143 / SU-1).